A 343-amino-acid polypeptide reads, in one-letter code: Dihydroorotase (343 aa).

Residues His14 and His16 each coordinate Zn(2+). Substrate is bound by residues 16 to 18 (HLR) and Asn42. Lys99, His136, and His174 together coordinate Zn(2+). Lys99 carries the post-translational modification N6-carboxylysine. His136 contributes to the substrate binding site. Leu219 is a binding site for substrate. Asp247 is a Zn(2+) binding site. Asp247 is a catalytic residue. Positions 251 and 263 each coordinate substrate.

Belongs to the metallo-dependent hydrolases superfamily. DHOase family. Class II DHOase subfamily. In terms of assembly, homodimer. The cofactor is Zn(2+).

It catalyses the reaction (S)-dihydroorotate + H2O = N-carbamoyl-L-aspartate + H(+). Its pathway is pyrimidine metabolism; UMP biosynthesis via de novo pathway; (S)-dihydroorotate from bicarbonate: step 3/3. Its function is as follows. Catalyzes the reversible cyclization of carbamoyl aspartate to dihydroorotate. The chain is Dihydroorotase from Psychromonas ingrahamii (strain DSM 17664 / CCUG 51855 / 37).